Here is a 246-residue protein sequence, read N- to C-terminus: Pyridoxine 5'-phosphate synthase (246 aa).

3-amino-2-oxopropyl phosphate is bound at residue Asn-12. 1-deoxy-D-xylulose 5-phosphate is bound at residue 14 to 15 (DH). Arg-23 lines the 3-amino-2-oxopropyl phosphate pocket. Residue His-48 is the Proton acceptor of the active site. 1-deoxy-D-xylulose 5-phosphate is bound by residues Arg-50 and His-55. Glu-75 serves as the catalytic Proton acceptor. Thr-105 lines the 1-deoxy-D-xylulose 5-phosphate pocket. His-196 (proton donor) is an active-site residue. 3-amino-2-oxopropyl phosphate-binding positions include Gly-197 and 218 to 219 (GH).

This sequence belongs to the PNP synthase family. In terms of assembly, homooctamer; tetramer of dimers.

The protein resides in the cytoplasm. It carries out the reaction 3-amino-2-oxopropyl phosphate + 1-deoxy-D-xylulose 5-phosphate = pyridoxine 5'-phosphate + phosphate + 2 H2O + H(+). It participates in cofactor biosynthesis; pyridoxine 5'-phosphate biosynthesis; pyridoxine 5'-phosphate from D-erythrose 4-phosphate: step 5/5. Its function is as follows. Catalyzes the complicated ring closure reaction between the two acyclic compounds 1-deoxy-D-xylulose-5-phosphate (DXP) and 3-amino-2-oxopropyl phosphate (1-amino-acetone-3-phosphate or AAP) to form pyridoxine 5'-phosphate (PNP) and inorganic phosphate. In Pseudomonas savastanoi pv. phaseolicola (strain 1448A / Race 6) (Pseudomonas syringae pv. phaseolicola (strain 1448A / Race 6)), this protein is Pyridoxine 5'-phosphate synthase.